The following is a 547-amino-acid chain: Vacuolar fusion protein MON1 homolog B (547 aa).

An N-acetylmethionine modification is found at Met-1. Residues 1 to 15 (MEVGGDTAAPAPGGA) show a composition bias toward low complexity. Residues 1–106 (MEVGGDTAAP…GGDPSDEEWR (106 aa)) are disordered. A phosphoserine mark is found at Ser-59 and Ser-61.

Belongs to the MON1/SAND family. In terms of assembly, interacts with CCNT2; down-regulates CCNT2-mediated activation of viral promoters during herpes simplex virus 1/HHV-1 infection. Found in a complex with RMC1, CCZ1 MON1A and MON1B.

This chain is Vacuolar fusion protein MON1 homolog B (MON1B), found in Homo sapiens (Human).